A 650-amino-acid polypeptide reads, in one-letter code: Flap endonuclease 1 (650 aa).

The interval 1-106 is N-domain; the sequence is MGIKGLTKFI…SELEKRGEKR (106 aa). Residue aspartate 34 participates in Mg(2+) binding. DNA contacts are provided by arginine 47 and arginine 72. Mg(2+) contacts are provided by aspartate 88, glutamate 160, glutamate 162, aspartate 181, and aspartate 183. The segment at 124–266 is I-domain; it reads EIKKQSGRTV…KTAYNLIKEY (143 aa). Residue glutamate 160 participates in DNA binding. The DNA site is built by glycine 244 and aspartate 246. Aspartate 246 contacts Mg(2+). The interaction with PCNA stretch occupies residues 349–357; the sequence is TQRRLDNFF. Residues 371–592 form a disordered region; sequence ETKKEQTLPA…NSYNNIKNNN (222 aa). 3 stretches are compositionally biased toward basic and acidic residues: residues 413–469, 478–502, and 511–524; these read MKEE…KKSL, DSDK…EKIN, and DHSR…KDNI. The segment covering 525–562 has biased composition (low complexity); that stretch reads SDINNNNNNNNNNSSSNNNNISNNHFNSVSSNSTFNSS. Basic and acidic residues predominate over residues 565–581; sequence LKSEDTLKSNSPLKEDS. Positions 582 to 592 are enriched in low complexity; that stretch reads PNSYNNIKNNN.

Belongs to the XPG/RAD2 endonuclease family. FEN1 subfamily. In terms of assembly, interacts with PCNA1 and PCNA2. Three molecules of FEN1 bind to one PCNA trimer with each molecule binding to one PCNA monomer. PCNA stimulates the nuclease activity without altering cleavage specificity. It depends on Mg(2+) as a cofactor. Phosphorylated. Phosphorylation upon DNA damage induces relocalization to the nuclear plasma.

It is found in the nucleus. Its subcellular location is the nucleolus. The protein localises to the nucleoplasm. It localises to the mitochondrion. Its activity is regulated as follows. Inhibited by monovalent metal ions. Functionally, structure-specific nuclease with 5'-flap endonuclease and 5'-3' exonuclease activities involved in DNA replication and repair. During DNA replication, cleaves the 5'-overhanging flap structure that is generated by displacement synthesis when DNA polymerase encounters the 5'-end of a downstream Okazaki fragment. It enters the flap from the 5'-end and then tracks to cleave the flap base, leaving a nick for ligation. Also involved in the long patch base excision repair (LP-BER) pathway, by cleaving within the apurinic/apyrimidinic (AP) site-terminated flap. Acts as a genome stabilization factor that prevents flaps from equilibrating into structures that lead to duplications and deletions. Also possesses 5'-3' exonuclease activity on nicked or gapped double-stranded DNA, and exhibits RNase H activity. Also involved in replication and repair of rDNA and in repairing mitochondrial DNA. The chain is Flap endonuclease 1 from Plasmodium falciparum.